The following is a 360-amino-acid chain: UDP-N-acetylglucosamine--N-acetylmuramyl-(pentapeptide) pyrophosphoryl-undecaprenol N-acetylglucosamine transferase (360 aa).

Residues 13–15, Asn125, Arg164, Ser191, and Gln290 each bind UDP-N-acetyl-alpha-D-glucosamine; that span reads TGG.

Belongs to the glycosyltransferase 28 family. MurG subfamily.

Its subcellular location is the cell inner membrane. The enzyme catalyses di-trans,octa-cis-undecaprenyl diphospho-N-acetyl-alpha-D-muramoyl-L-alanyl-D-glutamyl-meso-2,6-diaminopimeloyl-D-alanyl-D-alanine + UDP-N-acetyl-alpha-D-glucosamine = di-trans,octa-cis-undecaprenyl diphospho-[N-acetyl-alpha-D-glucosaminyl-(1-&gt;4)]-N-acetyl-alpha-D-muramoyl-L-alanyl-D-glutamyl-meso-2,6-diaminopimeloyl-D-alanyl-D-alanine + UDP + H(+). The protein operates within cell wall biogenesis; peptidoglycan biosynthesis. Cell wall formation. Catalyzes the transfer of a GlcNAc subunit on undecaprenyl-pyrophosphoryl-MurNAc-pentapeptide (lipid intermediate I) to form undecaprenyl-pyrophosphoryl-MurNAc-(pentapeptide)GlcNAc (lipid intermediate II). The polypeptide is UDP-N-acetylglucosamine--N-acetylmuramyl-(pentapeptide) pyrophosphoryl-undecaprenol N-acetylglucosamine transferase (Hahella chejuensis (strain KCTC 2396)).